Reading from the N-terminus, the 327-residue chain is Gonadotropin-releasing hormone receptor (327 aa).

Over 1–37 (MASASPEQNQNHCSAVNNSNMLMQGNLPTLTLSGKIR) the chain is Extracellular. An N-linked (GlcNAc...) asparagine glycan is attached at asparagine 17. The chain crosses the membrane as a helical span at residues 38–57 (VTVTFFLFLLSTIFNASFLL). The Cytoplasmic segment spans residues 58–76 (KLQKWTQKKEKGKKLSRMK). Residues 77–96 (VLLKHLTLANLLETLIVMPL) traverse the membrane as a helical segment. Over 97 to 114 (DGMWNITVQWYAGEFLCK) the chain is Extracellular. N-linked (GlcNAc...) asparagine glycosylation is present at asparagine 101. Residues cysteine 113 and cysteine 195 are joined by a disulfide bond. A helical membrane pass occupies residues 115-136 (VLSYLKLFSMYAPAFMMVVISL). Residues 137–163 (DRSLAITRPLAMKNNGKLGQSMIGLAW) lie on the Cytoplasmic side of the membrane. The chain crosses the membrane as a helical span at residues 164 to 183 (LLSGIFAGPQLYIFRMIHLA). The Extracellular segment spans residues 184-211 (DSSGQTEGFPQCVTHCSFPQWWHQAFYN). A helical transmembrane segment spans residues 212-231 (FFTFSCLFIIPLFITLICNA). Over 232–280 (KIIFTLTRVLHQDPHELQLNQSKNNIPRARLRTLKMTVAFATSFTVCWT) the chain is Cytoplasmic. A helical transmembrane segment spans residues 281–299 (PYYVLGIWYWFDPEMLNRV). Over 300–305 (SDPVNH) the chain is Extracellular. The chain crosses the membrane as a helical span at residues 306–325 (FFFLFALLNPCFDPLIYGYF). The Cytoplasmic segment spans residues 326 to 327 (SL).

It belongs to the G-protein coupled receptor 1 family.

The protein localises to the cell membrane. Its function is as follows. Receptor for gonadotropin releasing hormone (GnRH) that mediates the action of GnRH to stimulate the secretion of the gonadotropic hormones luteinizing hormone (LH) and follicle-stimulating hormone (FSH). This receptor mediates its action by association with G-proteins that activate a phosphatidylinositol-calcium second messenger system. This Canis lupus familiaris (Dog) protein is Gonadotropin-releasing hormone receptor (GNRHR).